A 691-amino-acid chain; its full sequence is Replication and transcription activator (691 aa).

Residues Thr-366 and Thr-367 are each glycosylated (O-linked (GlcNAc) threonine; by host). 2 disordered regions span residues 482–582 (EASG…SLPP) and 626–677 (LDTP…QESG). Low complexity predominate over residues 504 to 513 (TAAATAAEAT). Residues 515-531 (PKRKQRSKERSSKKRKA) show a composition bias toward basic residues. A compositionally biased stretch (low complexity) spans 539-556 (TTPSTTTPGTSLGSITTP). Positions 655–677 (EYTQLQPVRATSATPANEVQESG) are enriched in polar residues.

The protein belongs to the herpesviridae TAF50 family. Homotetramer. Interacts with KTA/ORF57. Interacts with host PARP1; this interaction negatively regulates RTA/ORF50 transactivation activity. Interacts with host SMC5 and SMC6; these interactions remove the repressive chromatin structure to allow viral reactivation. Interacts with host POU2F1; this interaction enhances RTA/ORF50-mediated transactivation of several viral promoters including K-bZIP promoter.

It is found in the host nucleus. It catalyses the reaction S-ubiquitinyl-[E2 ubiquitin-conjugating enzyme]-L-cysteine + [acceptor protein]-L-lysine = [E2 ubiquitin-conjugating enzyme]-L-cysteine + N(6)-ubiquitinyl-[acceptor protein]-L-lysine.. Its function is as follows. Transcriptional transactivator that is necessary and sufficient for reactivation of the virus from latency. Acts post-transcriptionally and transcriptionally to regulate viral lytic gene expression and synergistically with ORF57 activates certain early and late viral promoters including its own promoter. Autostimulation on its promoter is mediated by the formation of a ternary complex between ORF50 and the cellular components HGMB1 and POU2F1. Also possesses a bimodal activity in targeting proteins for degradation through using its own E3 ligase activity or by stabilizing and chaperoning host E3 ligases. These activities help to subvert the host innate and adaptive immune responses while also modulating the host transcriptome and protein landscape to promote virus production. For instance, targets the host SMC5/6 complex for ubiquitination and subsequent degradation through the ubiquitin-proteasome during reactivation while during latency, host SMC5/6 complex binds to the viral episome and condenses viral chromatin, creating a repressive chromatin structure to silence genome transcription. Hijacks the cellular E3 ligase complex RNF20/40 to increase the level of transcriptionally active RNA polymerase II on viral gene promoters thereby facilitating lytic gene expression. Acts as a SUMO-targeting ubiquitin ligase and affects general sumoylation of cellular proteins. Promotes the polyubiquitination and subsequent degradation of host MYD88 and thereby inhibits MYD88-mediated TLR4 signaling. Induces the degradation of vFLIP/ORF71 together with cellular ubiquitin ligase ITCH to prevent vFLIP-induced NF-kappa-B signaling. The polypeptide is Replication and transcription activator (ORF50) (Homo sapiens (Human)).